A 459-amino-acid polypeptide reads, in one-letter code: Sulfide:quinone oxidoreductase, mitochondrial (459 aa).

The N-terminal 24 residues, methionine 1–phenylalanine 24, are a transit peptide targeting the mitochondrion. Residue glycine 35–alanine 39 participates in FAD binding. Active-site cysteine persulfide intermediate residues include cysteine 204 and cysteine 383.

This sequence belongs to the SQRD family. Requires FAD as cofactor.

It localises to the mitochondrion. In terms of biological role, catalyzes the oxidation of hydrogen sulfide, with the help of a quinone. This is Sulfide:quinone oxidoreductase, mitochondrial (hmt2) from Schizosaccharomyces pombe (strain 972 / ATCC 24843) (Fission yeast).